The primary structure comprises 87 residues: Mitochondrial import inner membrane translocase subunit TIM8 (87 aa).

The short motif at Cys-44–Cys-68 is the Twin CX3C motif element. 2 cysteine pairs are disulfide-bonded: Cys-44–Cys-68 and Cys-48–Cys-64.

It belongs to the small Tim family. As to quaternary structure, heterohexamer; composed of 3 copies of TIM8 and 3 copies of TIM13, named soluble 70 kDa complex. Associates with the TIM22 complex, whose core is composed of TIM18, TIM22 and TIM54. Interacts with the transmembrane regions of multi-pass transmembrane proteins in transit.

It localises to the mitochondrion inner membrane. Its subcellular location is the mitochondrion intermembrane space. Functionally, mitochondrial intermembrane chaperone that participates in the import and insertion of some multi-pass transmembrane proteins into the mitochondrial inner membrane. Also required for the transfer of beta-barrel precursors from the TOM complex to the sorting and assembly machinery (SAM complex) of the outer membrane. Acts as a chaperone-like protein that protects the hydrophobic precursors from aggregation and guide them through the mitochondrial intermembrane space. The TIM8-TIM13 complex is non essential and only mediates the import of few proteins under precise conditions, while the predominant TIM9-TIM10 70 kDa complex is crucial and mediates the import of much more proteins. Strictly required for import of TIM23 in some conditions, when a low membrane potential exists in the mitochondria. The protein is Mitochondrial import inner membrane translocase subunit TIM8 (TIM8) of Saccharomyces cerevisiae (strain ATCC 204508 / S288c) (Baker's yeast).